Consider the following 123-residue polypeptide: Small ribosomal subunit protein uS12 (123 aa).

D89 is modified (3-methylthioaspartic acid).

Belongs to the universal ribosomal protein uS12 family. In terms of assembly, part of the 30S ribosomal subunit. Contacts proteins S8 and S17. May interact with IF1 in the 30S initiation complex.

Its function is as follows. With S4 and S5 plays an important role in translational accuracy. In terms of biological role, interacts with and stabilizes bases of the 16S rRNA that are involved in tRNA selection in the A site and with the mRNA backbone. Located at the interface of the 30S and 50S subunits, it traverses the body of the 30S subunit contacting proteins on the other side and probably holding the rRNA structure together. The combined cluster of proteins S8, S12 and S17 appears to hold together the shoulder and platform of the 30S subunit. The chain is Small ribosomal subunit protein uS12 from Gluconacetobacter diazotrophicus (strain ATCC 49037 / DSM 5601 / CCUG 37298 / CIP 103539 / LMG 7603 / PAl5).